The sequence spans 210 residues: Ion-translocating oxidoreductase complex subunit G (210 aa).

A helical transmembrane segment spans residues 9–29 (SLVLALFAIAATALVTITYAL). The residue at position 176 (T176) is an FMN phosphoryl threonine.

It belongs to the RnfG family. The complex is composed of six subunits: RnfA, RnfB, RnfC, RnfD, RnfE and RnfG. FMN serves as cofactor.

Its subcellular location is the cell inner membrane. In terms of biological role, part of a membrane-bound complex that couples electron transfer with translocation of ions across the membrane. This is Ion-translocating oxidoreductase complex subunit G from Aliivibrio fischeri (strain MJ11) (Vibrio fischeri).